The sequence spans 347 residues: Phenylalanine--tRNA ligase alpha subunit (347 aa).

E265 lines the Mg(2+) pocket.

The protein belongs to the class-II aminoacyl-tRNA synthetase family. Phe-tRNA synthetase alpha subunit type 1 subfamily. Tetramer of two alpha and two beta subunits. Mg(2+) serves as cofactor.

It localises to the cytoplasm. The catalysed reaction is tRNA(Phe) + L-phenylalanine + ATP = L-phenylalanyl-tRNA(Phe) + AMP + diphosphate + H(+). This chain is Phenylalanine--tRNA ligase alpha subunit, found in Wolbachia pipientis subsp. Culex pipiens (strain wPip).